We begin with the raw amino-acid sequence, 438 residues long: Aspartate--tRNA(Asp/Asn) ligase (438 aa).

Glutamate 176 contributes to the L-aspartate binding site. Residues 198–201 (QLYK) form an aspartate region. Residue arginine 220 coordinates L-aspartate. Residues 220–222 (RAE), 228–230 (RHL), and glutamate 361 each bind ATP. The Mg(2+) site is built by glutamate 361 and serine 364. Residues serine 364 and arginine 368 each contribute to the L-aspartate site. 409-412 (GADR) is a binding site for ATP.

The protein belongs to the class-II aminoacyl-tRNA synthetase family. Type 2 subfamily. In terms of assembly, homodimer. Mg(2+) is required as a cofactor.

It is found in the cytoplasm. The catalysed reaction is tRNA(Asx) + L-aspartate + ATP = L-aspartyl-tRNA(Asx) + AMP + diphosphate. Functionally, aspartyl-tRNA synthetase with relaxed tRNA specificity since it is able to aspartylate not only its cognate tRNA(Asp) but also tRNA(Asn). Reaction proceeds in two steps: L-aspartate is first activated by ATP to form Asp-AMP and then transferred to the acceptor end of tRNA(Asp/Asn). The polypeptide is Aspartate--tRNA(Asp/Asn) ligase (Methanococcus maripaludis (strain C7 / ATCC BAA-1331)).